Reading from the N-terminus, the 871-residue chain is Zinc finger and BTB domain-containing protein 10 (871 aa).

2 disordered regions span residues 1–156 (MSFS…FNGR) and 177–228 (GASL…AGEG). Positions 14 to 26 (RGGGLVTASGGGS) are enriched in gly residues. The segment covering 27–37 (TNNNAGGEASA) has biased composition (low complexity). Over residues 39–56 (PPQPQPRQPPPPAPPALQ) the composition is skewed to pro residues. Positions 65 to 76 (EEVELEGLEPQD) are enriched in acidic residues. Low complexity predominate over residues 77 to 103 (LEASAGPAAGAAEEAKELLLPQDAGGP). Arg126 is subject to Omega-N-methylarginine. Residues 126–135 (RGGGGGGLGN) show a composition bias toward gly residues. The residue at position 210 (Ser210) is a Phosphoserine. Lys245 participates in a covalent cross-link: Glycyl lysine isopeptide (Lys-Gly) (interchain with G-Cter in SUMO2). Residues 364–433 (CDVSIVVSGK…LYSGNLVLTS (70 aa)) enclose the BTB domain. Residues Lys468, Lys483, and Lys497 each participate in a glycyl lysine isopeptide (Lys-Gly) (interchain with G-Cter in SUMO2) cross-link. Residue Ser565 is modified to Phosphoserine. Glycyl lysine isopeptide (Lys-Gly) (interchain with G-Cter in SUMO2) cross-links involve residues Lys573, Lys672, Lys684, Lys696, and Lys706. 2 consecutive C2H2-type zinc fingers follow at residues 722–744 (LKCP…LLIH) and 750–772 (FSCD…SLVH). Residues 812 to 871 (SQPGGQEGVDQGQDTEFPRDEEYEENEVGEADEELVDDGEDQNDPSRWDESGEVCMSLDD) are disordered. Over residues 830–854 (RDEEYEENEVGEADEELVDDGEDQN) the composition is skewed to acidic residues.

The protein resides in the nucleus. In terms of biological role, may be involved in transcriptional regulation. The chain is Zinc finger and BTB domain-containing protein 10 (ZBTB10) from Homo sapiens (Human).